Reading from the N-terminus, the 354-residue chain is tRNA pseudouridine synthase D (354 aa).

Asp-86 (nucleophile) is an active-site residue. The 148-residue stretch at 162–309 (GVPNYFGPQR…LEVGRRALRL (148 aa)) folds into the TRUD domain.

The protein belongs to the pseudouridine synthase TruD family.

The enzyme catalyses uridine(13) in tRNA = pseudouridine(13) in tRNA. Its function is as follows. Responsible for synthesis of pseudouridine from uracil-13 in transfer RNAs. The polypeptide is tRNA pseudouridine synthase D (Methylococcus capsulatus (strain ATCC 33009 / NCIMB 11132 / Bath)).